The following is a 467-amino-acid chain: Argininosuccinate lyase (467 aa).

The protein belongs to the lyase 1 family. Argininosuccinate lyase subfamily.

Its subcellular location is the cytoplasm. It catalyses the reaction 2-(N(omega)-L-arginino)succinate = fumarate + L-arginine. Its pathway is amino-acid biosynthesis; L-arginine biosynthesis; L-arginine from L-ornithine and carbamoyl phosphate: step 3/3. The polypeptide is Argininosuccinate lyase (Campylobacter curvus (strain 525.92)).